Reading from the N-terminus, the 224-residue chain is tRNA (guanine-N(7)-)-methyltransferase (224 aa).

Glu52, Asp77, and Asp126 together coordinate S-adenosyl-L-methionine. Residue Asp126 is part of the active site. Residues Lys130 and Asp162 each contribute to the substrate site.

It belongs to the class I-like SAM-binding methyltransferase superfamily. TrmB family.

The catalysed reaction is guanosine(46) in tRNA + S-adenosyl-L-methionine = N(7)-methylguanosine(46) in tRNA + S-adenosyl-L-homocysteine. It functions in the pathway tRNA modification; N(7)-methylguanine-tRNA biosynthesis. In terms of biological role, catalyzes the formation of N(7)-methylguanine at position 46 (m7G46) in tRNA. This Christiangramia forsetii (strain DSM 17595 / CGMCC 1.15422 / KT0803) (Gramella forsetii) protein is tRNA (guanine-N(7)-)-methyltransferase.